The following is a 278-amino-acid chain: Tryptophan synthase alpha chain (278 aa).

Catalysis depends on proton acceptor residues Glu50 and Asp61.

This sequence belongs to the TrpA family. As to quaternary structure, tetramer of two alpha and two beta chains.

The enzyme catalyses (1S,2R)-1-C-(indol-3-yl)glycerol 3-phosphate + L-serine = D-glyceraldehyde 3-phosphate + L-tryptophan + H2O. It functions in the pathway amino-acid biosynthesis; L-tryptophan biosynthesis; L-tryptophan from chorismate: step 5/5. In terms of biological role, the alpha subunit is responsible for the aldol cleavage of indoleglycerol phosphate to indole and glyceraldehyde 3-phosphate. In Rhodopseudomonas palustris (strain BisB5), this protein is Tryptophan synthase alpha chain.